A 207-amino-acid chain; its full sequence is Guanylate kinase (207 aa).

The Guanylate kinase-like domain maps to 6 to 185 (GLLIVLSGPS…AKERIQSIVE (180 aa)). Residue 13–20 (GPSGVGKG) participates in ATP binding.

This sequence belongs to the guanylate kinase family.

Its subcellular location is the cytoplasm. It carries out the reaction GMP + ATP = GDP + ADP. Essential for recycling GMP and indirectly, cGMP. This is Guanylate kinase from Staphylococcus haemolyticus (strain JCSC1435).